The primary structure comprises 169 residues: Caltractin (169 aa).

Residues 1 to 24 (MSYRKTVVSARRDQKKGRVGGLTE) form a disordered region. 4 EF-hand domains span residues 25 to 60 (EQKQ…LGFE), 61 to 96 (PKKE…KMGE), 98 to 133 (DSRE…LGEN), and 134 to 169 (LTDE…TSLF). Residues Asp38, Asp40, Ser42, Thr44, and Glu49 each contribute to the Ca(2+) site. Asp147, Asn149, Asp151, Gln153, and Glu158 together coordinate Ca(2+).

This sequence belongs to the centrin family.

This calcium-binding protein is found in the basal body complexes (the functional homolog of the centrosome in animal cell). In mitotic cells it is specifically associated with the poles of the mitotic spindles at the sites of the duplicated basal body complexes. This is Caltractin from Dunaliella salina (Green alga).